Reading from the N-terminus, the 432-residue chain is Glutamyl-tRNA reductase (432 aa).

Substrate contacts are provided by residues 55–58 (TCNR), S114, 119–121 (ETQ), and Q125. The active-site Nucleophile is C56. 194-199 (GAGEMI) serves as a coordination point for NADP(+).

Belongs to the glutamyl-tRNA reductase family. Homodimer.

The enzyme catalyses (S)-4-amino-5-oxopentanoate + tRNA(Glu) + NADP(+) = L-glutamyl-tRNA(Glu) + NADPH + H(+). It functions in the pathway porphyrin-containing compound metabolism; protoporphyrin-IX biosynthesis; 5-aminolevulinate from L-glutamyl-tRNA(Glu): step 1/2. Functionally, catalyzes the NADPH-dependent reduction of glutamyl-tRNA(Glu) to glutamate 1-semialdehyde (GSA). This chain is Glutamyl-tRNA reductase, found in Burkholderia ambifaria (strain ATCC BAA-244 / DSM 16087 / CCUG 44356 / LMG 19182 / AMMD) (Burkholderia cepacia (strain AMMD)).